We begin with the raw amino-acid sequence, 207 residues long: U1 small nuclear ribonucleoprotein C (207 aa).

Residues 4–36 (YYCDYCDTYLTHDSPSVRKQHNAGYKHKANVRI) form a Matrin-type zinc finger. Pro residues-rich tracts occupy residues 105–115 (PPQGYMPPPGV) and 122–131 (PGAPLPPPPQ). Positions 105 to 207 (PPQGYMPPPG…PSAESPESNE (103 aa)) are disordered. A compositionally biased stretch (low complexity) spans 132-144 (NGILRPPGMAPIP). Pro residues predominate over residues 162–183 (GPPPNYNGLPPPPPYHTNPAAP). Residues 184–207 (PSGNFNNPNLNNPNPSAESPESNE) are compositionally biased toward low complexity.

This sequence belongs to the U1 small nuclear ribonucleoprotein C family. In terms of assembly, U1 snRNP is composed of the 7 core Sm proteins B/B', D1, D2, D3, E, F and G that assemble in a heptameric protein ring on the Sm site of the small nuclear RNA to form the core snRNP, and at least 3 U1 snRNP-specific proteins U1-70K, U1-A and U1-C. U1-C interacts with U1 snRNA and the 5' splice-site region of the pre-mRNA.

Its subcellular location is the nucleus. Its function is as follows. Component of the spliceosomal U1 snRNP, which is essential for recognition of the pre-mRNA 5' splice-site and the subsequent assembly of the spliceosome. U1-C is directly involved in initial 5' splice-site recognition for both constitutive and regulated alternative splicing. The interaction with the 5' splice-site seems to precede base-pairing between the pre-mRNA and the U1 snRNA. Stimulates commitment or early (E) complex formation by stabilizing the base pairing of the 5' end of the U1 snRNA and the 5' splice-site region. This is U1 small nuclear ribonucleoprotein C from Arabidopsis thaliana (Mouse-ear cress).